Consider the following 279-residue polypeptide: MKSKALLCINTLKSGAGILGDDIKVYLETKHFVEVVLIDVSKPLLSFPRENFLFLITLGGDGTVLLAVNLLLENKNVDIPIISINMGKVGFLADIKIEDFKKVIDRFFKNSLVINKKFLLHVTVYKHGKDLISRYALNDIIIRSSLLNKMIHVDLKVNSENFLSYKSDGIIVSTPTGSTGYSFSAGGPILEAELEGFLLTPISPHSVYNRSFVFSKLSKLSLSFSKEYFIAPASIFLDGINFGSFGVDVVFEFEISSQSLNFVSFCTDTFVKRLKNKLL.

Residue Asp-61 is the Proton acceptor of the active site. Residues 61 to 62 (DG), 138 to 139 (ND), Lys-149, Lys-166, Asp-168, and 179 to 184 (TGYSFS) contribute to the NAD(+) site.

It belongs to the NAD kinase family. Requires a divalent metal cation as cofactor.

The protein localises to the cytoplasm. It catalyses the reaction NAD(+) + ATP = ADP + NADP(+) + H(+). Involved in the regulation of the intracellular balance of NAD and NADP, and is a key enzyme in the biosynthesis of NADP. Catalyzes specifically the phosphorylation on 2'-hydroxyl of the adenosine moiety of NAD to yield NADP. The polypeptide is NAD kinase (Borrelia garinii subsp. bavariensis (strain ATCC BAA-2496 / DSM 23469 / PBi) (Borreliella bavariensis)).